The following is a 159-amino-acid chain: 3-dehydroquinate dehydratase (159 aa).

Tyrosine 22 acts as the Proton acceptor in catalysis. Residues asparagine 73, histidine 79, and aspartate 86 each coordinate substrate. Histidine 99 functions as the Proton donor in the catalytic mechanism. Residues 100-101 (IS) and arginine 110 contribute to the substrate site.

Belongs to the type-II 3-dehydroquinase family. Homododecamer.

It carries out the reaction 3-dehydroquinate = 3-dehydroshikimate + H2O. Its pathway is metabolic intermediate biosynthesis; chorismate biosynthesis; chorismate from D-erythrose 4-phosphate and phosphoenolpyruvate: step 3/7. In terms of biological role, catalyzes a trans-dehydration via an enolate intermediate. The polypeptide is 3-dehydroquinate dehydratase (Campylobacter jejuni subsp. jejuni serotype O:6 (strain 81116 / NCTC 11828)).